The sequence spans 923 residues: Periodic tryptophan protein 2 (923 aa).

WD repeat units follow at residues glycine 12–tyrosine 52, glutamate 53–phenylalanine 93, asparagine 94–glutamine 132, glycine 144–alanine 183, and glycine 189–aspartate 228. 2 positions are modified to phosphoserine: serine 225 and serine 232. WD repeat units follow at residues alanine 258–glutamine 297, methionine 300–lysine 340, glycine 343–threonine 382, glutamate 385–threonine 424, threonine 428–serine 470, glycine 471–glutamate 510, glutamate 513–asparagine 552, and glutamate 575–arginine 614. A phosphoserine mark is found at serine 651 and serine 664. The disordered stretch occupies residues leucine 653–lysine 674. A WD 14 repeat occupies arginine 676–proline 714. Acidic residues-rich tracts occupy residues lysine 869 to glycine 893 and aspartate 911 to proline 923. The interval lysine 869 to proline 923 is disordered. Serine 912 and serine 913 each carry phosphoserine.

Belongs to the WD repeat PWP2 family. As to quaternary structure, interacts with snoRNA U3. Interacts with MPP10. Component of the ribosomal small subunit (SSU) processome composed of at least 40 protein subunits and snoRNA U3.

It is found in the nucleus. The protein localises to the nucleolus. In terms of biological role, required for bud-site selection and cell separation. Also involved in nucleolar processing of pre-18S ribosomal RNA. The polypeptide is Periodic tryptophan protein 2 (PWP2) (Saccharomyces cerevisiae (strain ATCC 204508 / S288c) (Baker's yeast)).